Consider the following 84-residue polypeptide: Small ribosomal subunit protein uS17c (84 aa).

It belongs to the universal ribosomal protein uS17 family. Part of the 30S ribosomal subunit.

It localises to the plastid. Its subcellular location is the chloroplast. Its function is as follows. One of the primary rRNA binding proteins, it binds specifically to the 5'-end of 16S ribosomal RNA. This chain is Small ribosomal subunit protein uS17c (rps17), found in Trieres chinensis (Marine centric diatom).